We begin with the raw amino-acid sequence, 114 residues long: Ribosome-binding factor A (114 aa).

The protein belongs to the RbfA family. As to quaternary structure, monomer. Binds 30S ribosomal subunits, but not 50S ribosomal subunits or 70S ribosomes.

The protein localises to the cytoplasm. One of several proteins that assist in the late maturation steps of the functional core of the 30S ribosomal subunit. Associates with free 30S ribosomal subunits (but not with 30S subunits that are part of 70S ribosomes or polysomes). Required for efficient processing of 16S rRNA. May interact with the 5'-terminal helix region of 16S rRNA. The sequence is that of Ribosome-binding factor A from Listeria innocua serovar 6a (strain ATCC BAA-680 / CLIP 11262).